The sequence spans 540 residues: Membrane protein insertase YidC (540 aa).

The helical transmembrane segment at 6-26 (NILLIALALVSFLLFQQWQVA) threads the bilayer. The segment covering 36 to 47 (QAQSSSSLPAPS) has biased composition (low complexity). The segment at 36-63 (QAQSSSSLPAPSFADELDPVPGQQQASA) is disordered. The next 4 membrane-spanning stretches (helical) occupy residues 342–362 (AFIQ…TFIV), 417–437 (LGGC…YWAL), 455–475 (LSAQ…MFLI), and 496–516 (PVMF…YWLV).

It belongs to the OXA1/ALB3/YidC family. Type 1 subfamily. In terms of assembly, interacts with the Sec translocase complex via SecD. Specifically interacts with transmembrane segments of nascent integral membrane proteins during membrane integration.

It localises to the cell inner membrane. Required for the insertion and/or proper folding and/or complex formation of integral membrane proteins into the membrane. Involved in integration of membrane proteins that insert both dependently and independently of the Sec translocase complex, as well as at least some lipoproteins. Aids folding of multispanning membrane proteins. The polypeptide is Membrane protein insertase YidC (Vibrio parahaemolyticus serotype O3:K6 (strain RIMD 2210633)).